The primary structure comprises 420 residues: Chaperone protein dnaJ 3 (420 aa).

Residues 14–75 (KFYEILGVPK…EKREIYDQYG (62 aa)) enclose the J domain. Residues 135-219 (GTMKKLSLSR…CKGDKVIPEK (85 aa)) form a CR-type zinc finger. 8 residues coordinate Zn(2+): Cys-148, Cys-151, Cys-164, Cys-167, Cys-191, Cys-194, Cys-207, and Cys-210. CXXCXGXG motif repeat units lie at residues 148-155 (CSKCNGKG), 164-171 (CGGCQGSG), 191-198 (CNECKGTG), and 207-214 (CPQCKGDK). The interval 376–420 (ETTLHDVNIEDEMRRKAQAQREAYDDDDEDDDHPGGAQRVQCAQQ) is disordered. Residues 377–390 (TTLHDVNIEDEMRR) are compositionally biased toward basic and acidic residues. Cys-417 bears the Cysteine methyl ester mark. A lipid anchor (S-farnesyl cysteine) is attached at Cys-417. A propeptide spans 418 to 420 (AQQ) (removed in mature form).

This sequence belongs to the DnaJ family. A/I subfamily. Homodimer. It depends on Zn(2+) as a cofactor. Farnesylated. As to expression, roots, shoots, flowers, siliques and cotyledons.

It localises to the membrane. Its function is as follows. Plays a continuous role in plant development probably in the structural organization of compartments. This is Chaperone protein dnaJ 3 (ATJ3) from Arabidopsis thaliana (Mouse-ear cress).